A 275-amino-acid polypeptide reads, in one-letter code: Autophagy protein 5 (275 aa).

Residue Met1 is modified to N-acetylmethionine. Lys130 participates in a covalent cross-link: Glycyl lysine isopeptide (Lys-Gly) (interchain with G-Cter in ATG12).

This sequence belongs to the ATG5 family. As to quaternary structure, forms a conjugate with ATG12. Part of the minor complex composed of 4 sets of ATG12-ATG5 and ATG16L1 (400 kDa); this complex interacts with ATG3 leading to disruption of ATG7 interaction and promotion of ATG8-like proteins lipidation. Forms an 800-kDa complex composed of ATG12-ATG5 and ATG16L2. The ATG12-ATG5 conjugate interacts with RAB33A; this interaction is bridged by ATG16L1 and promotes ATG12-ATG5-ATG16L1 complex recruitment to phagophores. Interacts with TECPR1; the interaction is direct and does not take place when ATG16L1 is associated with the ATG5-ATG12 conjugate. Interacts with DHX58/RIG-1, IFIH1/MDA5 and MAVS/IPS-1 in monomeric form as well as in ATG12-ATG5 conjugate form. The interaction with MAVS is further enhanced upon vesicular stomatitis virus (VSV) infection. Interacts with ATG3. Interacts with ATG7 and ATG10. Interacts with FADD. Interacts with Bassoon/BSN; this interaction is important for the regulation of presynaptic autophagy. Interacts with ATG16L2. Conjugated to ATG12; which is essential for autophagy, but is not required for association with isolation membrane. Post-translationally, acetylated by EP300.

Its subcellular location is the cytoplasm. The protein localises to the preautophagosomal structure membrane. Its function is as follows. Involved in autophagic vesicle formation. Conjugation with ATG12, through a ubiquitin-like conjugating system involving ATG7 as an E1-like activating enzyme and ATG10 as an E2-like conjugating enzyme, is essential for its function. The ATG12-ATG5 conjugate acts as an E3-like enzyme which is required for lipidation of ATG8 family proteins and their association to the vesicle membranes. Involved in mitochondrial quality control after oxidative damage, and in subsequent cellular longevity. Plays a critical role in multiple aspects of lymphocyte development and is essential for both B and T lymphocyte survival and proliferation. Required for optimal processing and presentation of antigens for MHC II. Involved in the maintenance of axon morphology and membrane structures, as well as in normal adipocyte differentiation. Promotes primary ciliogenesis through removal of OFD1 from centriolar satellites and degradation of IFT20 via the autophagic pathway. As part of the ATG8 conjugation system with ATG12 and ATG16L1, required for recruitment of LRRK2 to stressed lysosomes and induction of LRRK2 kinase activity in response to lysosomal stress. May play an important role in the apoptotic process, possibly within the modified cytoskeleton. Its expression is a relatively late event in the apoptotic process, occurring downstream of caspase activity. Plays a crucial role in IFN-gamma-induced autophagic cell death by interacting with FADD. The chain is Autophagy protein 5 from Bos taurus (Bovine).